A 689-amino-acid chain; its full sequence is Centrosomal protein of 78 kDa (689 aa).

Phosphoserine is present on residues Ser-325 and Ser-327. Disordered stretches follow at residues 432-451, 563-589, and 614-689; these read SSEV…VPEK, PQMT…EPKQ, and DSFP…TESH. Positions 450–505 form a coiled coil; it reads EKTSIEQEALQEKLEECLKQLKEERVIRLKVDKRVSELEHENAQLRNINFSLSEAL. 2 stretches are compositionally biased toward basic and acidic residues: residues 573–587 and 666–689; these read PKEE…KPEP and QRKE…TESH.

The protein belongs to the CEP78 family. Interacts with PLK4. Interacts with FAM161A. Interacts with IFT20; regulating IFT20 stability and localization. Interacts with TTC21A; regulating TTC21A stability and localization. Interacts with USP16; promoting USP16-dependent deubiquitination of tektins. Interacts with DCAF1/VPRBP; promoting localization of the EDVP complex to centrosomes. Interacts with CEP350; promoting CEP78 localization to centrosome and centriole. As to expression, widely expressed. Expressed in different retinal cell types with higher expression in cone compared to rod cells (at protein level).

The protein localises to the cytoplasm. Its subcellular location is the cytoskeleton. The protein resides in the microtubule organizing center. It localises to the centrosome. It is found in the centriole. The protein localises to the cilium basal body. Centriole wall protein that localizes to mature centrioles and regulates centriole and cilia biogenesis. Involved in centrosome duplication: required for efficient PLK4 centrosomal localization and PLK4-induced overduplication of centrioles. Involved in cilium biogenesis and controls cilium length. Acts as a regulator of protein stability by preventing ubiquitination of centrosomal proteins, such as CCP110 and tektins. Associates with the EDVP complex, preventing ubiquitination and degradation of CCP110. Promotes deubiquitination of tektin proteins (TEKT1, TEKT2, TEK3, TEKT4 and TEKT5) via its interaction with USP16. In Homo sapiens (Human), this protein is Centrosomal protein of 78 kDa.